A 395-amino-acid chain; its full sequence is S-adenosylmethionine synthase (395 aa).

Position 15 (His15) interacts with ATP. Asp17 contacts Mg(2+). Glu43 is a K(+) binding site. Residues Glu56 and Gln99 each coordinate L-methionine. The flexible loop stretch occupies residues 99–109; the sequence is QSADIALGVDE. Residues 174-176, 240-241, Asp249, 255-256, Ala272, and Lys276 contribute to the ATP site; these read DGK, RF, and RK. An L-methionine-binding site is contributed by Asp249. Lys280 contacts L-methionine.

The protein belongs to the AdoMet synthase family. In terms of assembly, homotetramer; dimer of dimers. It depends on Mg(2+) as a cofactor. K(+) serves as cofactor.

It localises to the cytoplasm. It carries out the reaction L-methionine + ATP + H2O = S-adenosyl-L-methionine + phosphate + diphosphate. It functions in the pathway amino-acid biosynthesis; S-adenosyl-L-methionine biosynthesis; S-adenosyl-L-methionine from L-methionine: step 1/1. In terms of biological role, catalyzes the formation of S-adenosylmethionine (AdoMet) from methionine and ATP. The overall synthetic reaction is composed of two sequential steps, AdoMet formation and the subsequent tripolyphosphate hydrolysis which occurs prior to release of AdoMet from the enzyme. In Alkaliphilus oremlandii (strain OhILAs) (Clostridium oremlandii (strain OhILAs)), this protein is S-adenosylmethionine synthase.